The sequence spans 519 residues: Xylose import ATP-binding protein XylG (519 aa).

2 ABC transporter domains span residues 6-245 (LTMR…VGRE) and 262-507 (LEAR…LTPA). ATP is bound at residue 38–45 (GENGAGKS).

It belongs to the ABC transporter superfamily. Xylose importer (TC 3.A.1.2.4) family. In terms of assembly, the complex is composed of two ATP-binding proteins (XylG), two transmembrane proteins (XylH) and a solute-binding protein (XylF).

Its subcellular location is the cell inner membrane. The enzyme catalyses D-xylose(out) + ATP + H2O = D-xylose(in) + ADP + phosphate + H(+). In terms of biological role, part of the ABC transporter complex XylFGH involved in xylose import. Responsible for energy coupling to the transport system. This chain is Xylose import ATP-binding protein XylG, found in Burkholderia ambifaria (strain ATCC BAA-244 / DSM 16087 / CCUG 44356 / LMG 19182 / AMMD) (Burkholderia cepacia (strain AMMD)).